Here is a 243-residue protein sequence, read N- to C-terminus: Leucyl/phenylalanyl-tRNA--protein transferase (243 aa).

The protein belongs to the L/F-transferase family.

The protein resides in the cytoplasm. It catalyses the reaction N-terminal L-lysyl-[protein] + L-leucyl-tRNA(Leu) = N-terminal L-leucyl-L-lysyl-[protein] + tRNA(Leu) + H(+). The catalysed reaction is N-terminal L-arginyl-[protein] + L-leucyl-tRNA(Leu) = N-terminal L-leucyl-L-arginyl-[protein] + tRNA(Leu) + H(+). The enzyme catalyses L-phenylalanyl-tRNA(Phe) + an N-terminal L-alpha-aminoacyl-[protein] = an N-terminal L-phenylalanyl-L-alpha-aminoacyl-[protein] + tRNA(Phe). In terms of biological role, functions in the N-end rule pathway of protein degradation where it conjugates Leu, Phe and, less efficiently, Met from aminoacyl-tRNAs to the N-termini of proteins containing an N-terminal arginine or lysine. This Vibrio cholerae serotype O1 (strain ATCC 39315 / El Tor Inaba N16961) protein is Leucyl/phenylalanyl-tRNA--protein transferase.